The chain runs to 646 residues: Sulfate transporter 3.2 (646 aa).

Residues 1–76 lie on the Cytoplasmic side of the membrane; the sequence is MSSKRASQYH…GYSLEYLKSD (76 aa). A helical transmembrane segment spans residues 77–97; it reads VISGITIASLAIPQGISYAQL. At 98–99 the chain is on the extracellular side; the sequence is AN. A helical transmembrane segment spans residues 100 to 120; it reads LPPILGLYSSLVPPLVYAIMG. The Cytoplasmic portion of the chain corresponds to 121-124; the sequence is SSRD. A helical membrane pass occupies residues 125-145; the sequence is LAVGTVAVASLLTAAMLGKEV. At 146–154 the chain is on the extracellular side; sequence NAVVNPKLY. Residues 155–175 form a helical membrane-spanning segment; it reads LHLAFTATFFAGLMQTCLGLL. A topological domain (cytoplasmic) is located at residue arginine 176. Residues 177–197 traverse the membrane as a helical segment; the sequence is LGFVVEILSHAAIVGFMGGAA. Residues 198–235 are Extracellular-facing; sequence TVVCLQQLKGLLGLHHFTHSTDIVTVLRSIFSQSHMWR. Residues 236-256 traverse the membrane as a helical segment; the sequence is WESGVLGCCFLIFLLTTKYIS. The Cytoplasmic portion of the chain corresponds to 257–262; it reads KKRPKL. A helical membrane pass occupies residues 263–283; it reads FWISAMSPLVSVIFGTIFLYF. At 284-315 the chain is on the extracellular side; sequence LHDQFHGIQFIGELKKGINPPSITHLVFTPPY. Residues 316 to 336 form a helical membrane-spanning segment; that stretch reads VMLALKVGIITGVIALAEGIA. Over 337-354 the chain is Cytoplasmic; that stretch reads VGRSFAMYKNYNIDGNKE. A helical membrane pass occupies residues 355–375; it reads MIAFGMMNILGSFSSCYLTTG. At 376 to 390 the chain is on the extracellular side; that stretch reads PFSRSAVNYNAGCKT. The next 2 helical transmembrane spans lie at 391–411 and 412–432; these read ALSNVVMAVAVAVTLLFLTPL and FFYTPLVVLSSIIIAAMLGLV. Residues 433–447 are Extracellular-facing; that stretch reads DYEAAIHLWKLDKFD. Residues 448–468 traverse the membrane as a helical segment; it reads FFVCLSAYLGVVFGTIEIGLI. Over 469–646 the chain is Cytoplasmic; it reads LSVGISVMRL…DSPVPEFNNV (178 aa). The STAS domain occupies 504–627; sequence HYPQAITRSS…LTVAEAVAAC (124 aa).

Belongs to the SLC26A/SulP transporter (TC 2.A.53) family. As to expression, expressed only in leaves.

Its subcellular location is the membrane. Functionally, h(+)/sulfate cotransporter that may play a role in the regulation of sulfate assimilation. In Arabidopsis thaliana (Mouse-ear cress), this protein is Sulfate transporter 3.2 (SULTR3;2).